The sequence spans 124 residues: Apolipoprotein C-IV (124 aa).

The N-terminal stretch at 1 to 27 (MSLLRCRPRDLPSVSLSVLFLVSFVAS) is a signal peptide. N-linked (GlcNAc...) asparagine glycosylation occurs at Asn107.

The protein belongs to the apolipoprotein C4 family. As to expression, expressed by the liver and secreted in plasma.

The protein localises to the secreted. May participate in lipoprotein metabolism. The chain is Apolipoprotein C-IV (Apoc4) from Mus musculus (Mouse).